The chain runs to 545 residues: CTP synthase (545 aa).

An amidoligase domain region spans residues 1-266; sequence MTTNYIFVTG…DDYICKRFSL (266 aa). CTP is bound at residue Ser14. A UTP-binding site is contributed by Ser14. Residues 15-20 and Asp72 each bind ATP; that span reads SLGKGI. Residues Asp72 and Glu140 each contribute to the Mg(2+) site. CTP is bound by residues 147–149, 187–192, and Lys223; these read DIE and KTKPTQ. UTP-binding positions include 187–192 and Lys223; that span reads KTKPTQ. 239 to 241 is an ATP binding site; the sequence is KDV. The Glutamine amidotransferase type-1 domain maps to 291 to 542; the sequence is TIGMVGKYIE…VKAANEHQKR (252 aa). Gly352 is an L-glutamine binding site. Cys379 acts as the Nucleophile; for glutamine hydrolysis in catalysis. L-glutamine-binding positions include 380-383, Glu403, and Arg470; that span reads LGMQ. Catalysis depends on residues His515 and Glu517.

The protein belongs to the CTP synthase family. As to quaternary structure, homotetramer.

It catalyses the reaction UTP + L-glutamine + ATP + H2O = CTP + L-glutamate + ADP + phosphate + 2 H(+). It carries out the reaction L-glutamine + H2O = L-glutamate + NH4(+). The enzyme catalyses UTP + NH4(+) + ATP = CTP + ADP + phosphate + 2 H(+). Its pathway is pyrimidine metabolism; CTP biosynthesis via de novo pathway; CTP from UDP: step 2/2. With respect to regulation, allosterically activated by GTP, when glutamine is the substrate; GTP has no effect on the reaction when ammonia is the substrate. The allosteric effector GTP functions by stabilizing the protein conformation that binds the tetrahedral intermediate(s) formed during glutamine hydrolysis. Inhibited by the product CTP, via allosteric rather than competitive inhibition. Functionally, catalyzes the ATP-dependent amination of UTP to CTP with either L-glutamine or ammonia as the source of nitrogen. Regulates intracellular CTP levels through interactions with the four ribonucleotide triphosphates. In Salmonella newport (strain SL254), this protein is CTP synthase.